Consider the following 394-residue polypeptide: Actin-related protein 2 (394 aa).

Methionine 1 carries the N-acetylmethionine modification. ATP-binding positions include 160-162 (GDG) and 214-218 (RMIKE). Lysine 299 carries the N6-acetyllysine modification. ATP is bound at residue 305-310 (GGSTMY). Lysine 322 is subject to N6-acetyllysine.

This sequence belongs to the actin family. ARP2 subfamily. In terms of assembly, component of the Arp2/3 complex composed of ACTR2/ARP2, ACTR3/ARP3, ARPC1B/p41-ARC, ARPC2/p34-ARC, ARPC3/p21-ARC, ARPC4/p20-ARC and ARPC5/p16-ARC.

It is found in the cytoplasm. The protein localises to the cytoskeleton. The protein resides in the cell projection. Its subcellular location is the nucleus. In terms of biological role, ATP-binding component of the Arp2/3 complex, a multiprotein complex that mediates actin polymerization upon stimulation by nucleation-promoting factor (NPF). The Arp2/3 complex mediates the formation of branched actin networks in the cytoplasm, providing the force for cell motility. Seems to contact the pointed end of the daughter actin filament. In addition to its role in the cytoplasmic cytoskeleton, the Arp2/3 complex also promotes actin polymerization in the nucleus, thereby regulating gene transcription and repair of damaged DNA. The Arp2/3 complex promotes homologous recombination (HR) repair in response to DNA damage by promoting nuclear actin polymerization, leading to drive motility of double-strand breaks (DSBs). This is Actin-related protein 2 (Actr2) from Rattus norvegicus (Rat).